Reading from the N-terminus, the 179-residue chain is MSVVLQLTQLHQRFNDKTLKNTQKHPLMVHDEQWPSPCEIGNVDQQGNIQWQAVLQQPAGSLNDLAKALDVTFPSGLNALYGHMYGGNIQASIDGHQVELLQVWNSDDFDLLQQNITGHVLMKRKLKQPETVFIGLTAQDDLLVCVLLHSGEVCLEYVGKKTHHVLAANIEEFLQALEV.

This sequence belongs to the Syd family.

The protein localises to the cell inner membrane. Interacts with the SecY protein in vivo. May bind preferentially to an uncomplexed state of SecY, thus functioning either as a chelating agent for excess SecY in the cell or as a regulatory factor that negatively controls the translocase function. This is Protein Syd from Pseudoalteromonas translucida (strain TAC 125).